The following is a 225-amino-acid chain: Small ribosomal subunit protein uS3 (225 aa).

The KH type-2 domain occupies 39–109; it reads IYRFFNKFTR…ELKLNIEVVN (71 aa).

It belongs to the universal ribosomal protein uS3 family. As to quaternary structure, part of the 30S ribosomal subunit. Forms a tight complex with proteins S10 and S14.

Binds the lower part of the 30S subunit head. Binds mRNA in the 70S ribosome, positioning it for translation. In Mycoplasma mobile (strain ATCC 43663 / 163K / NCTC 11711) (Mesomycoplasma mobile), this protein is Small ribosomal subunit protein uS3.